The following is a 219-amino-acid chain: Claudin-3 (219 aa).

At 1–8 (MSMGLEIT) the chain is on the cytoplasmic side. Residues 9–29 (GTSLAVLGWLCTIVCCALPMW) traverse the membrane as a helical segment. Residues 30–80 (RVSAFIGSSIITAQITWEGLWMNCVVQSTGQMQCKMYDSLLALPQDLQAAR) lie on the Extracellular side of the membrane. Residues 81–101 (ALIVVSILLAAFGLLVALVGA) form a helical membrane-spanning segment. At 102 to 115 (QCTNCVQDETAKAK) the chain is on the cytoplasmic side. Residues 116–136 (ITIVAGVLFLLAAVLTLVPVS) traverse the membrane as a helical segment. Residues 137–161 (WSANTIIRDFYNPLVPEAQKREMGT) lie on the Extracellular side of the membrane. Residues 162 to 182 (GLYVGWAAAALQLLGGALLCC) traverse the membrane as a helical segment. Topologically, residues 183-219 (SCPPREKYAPTKILYSAPRSTGPGTGTGTAYDRKDYV) are cytoplasmic. Phosphotyrosine is present on tyrosine 197. Serine 198 bears the Phosphoserine mark. Positions 218–219 (YV) are interactions with TJP1, TJP2 and TJP3.

It belongs to the claudin family. As to quaternary structure, can form homo- and heteropolymers with other CLDN. Homopolymers interact with CLDN1 and CLDN2 homopolymers. Interacts in cis (within the same plasma membrane) with CLDN19. Directly interacts with TJP1/ZO-1, TJP2/ZO-2 and TJP3/ZO-3.

It is found in the cell junction. It localises to the tight junction. The protein resides in the cell membrane. In terms of biological role, plays a major role in tight junction-specific obliteration of the intercellular space, through calcium-independent cell-adhesion activity. The polypeptide is Claudin-3 (Cldn3) (Rattus norvegicus (Rat)).